Consider the following 425-residue polypeptide: 3-isopropylmalate dehydratase large subunit (425 aa).

[4Fe-4S] cluster-binding residues include Cys-306, Cys-366, and Cys-369.

The protein belongs to the aconitase/IPM isomerase family. LeuC type 2 subfamily. Heterodimer of LeuC and LeuD. It depends on [4Fe-4S] cluster as a cofactor.

It carries out the reaction (2R,3S)-3-isopropylmalate = (2S)-2-isopropylmalate. The protein operates within amino-acid biosynthesis; L-leucine biosynthesis; L-leucine from 3-methyl-2-oxobutanoate: step 2/4. Its function is as follows. Catalyzes the isomerization between 2-isopropylmalate and 3-isopropylmalate, via the formation of 2-isopropylmaleate. The sequence is that of 3-isopropylmalate dehydratase large subunit from Nautilia profundicola (strain ATCC BAA-1463 / DSM 18972 / AmH).